Consider the following 378-residue polypeptide: Succinate--CoA ligase [GDP-forming] subunit beta (378 aa).

The 227-residue stretch at 9–235 folds into the ATP-grasp domain; sequence KEILARYGVP…VEAEHPLEVE (227 aa). GTP contacts are provided by residues Lys45, 52-54, Val94, and Glu99; that span reads GRG. Mg(2+) contacts are provided by Asn190 and Asp204. Residues Asn255 and 312-314 contribute to the substrate site; that span reads GIT.

Belongs to the succinate/malate CoA ligase beta subunit family. Heterotetramer of two alpha and two beta subunits. Requires Mg(2+) as cofactor.

The catalysed reaction is GTP + succinate + CoA = succinyl-CoA + GDP + phosphate. It carries out the reaction succinate + ATP + CoA = succinyl-CoA + ADP + phosphate. The protein operates within carbohydrate metabolism; tricarboxylic acid cycle; succinate from succinyl-CoA (ligase route): step 1/1. In terms of biological role, succinyl-CoA synthetase functions in the citric acid cycle (TCA), coupling the hydrolysis of succinyl-CoA to the synthesis of either ATP or GTP and thus represents the only step of substrate-level phosphorylation in the TCA. The beta subunit provides nucleotide specificity of the enzyme and binds the substrate succinate, while the binding sites for coenzyme A and phosphate are found in the alpha subunit. Can use either ATP or GTP, but prefers GTP. In Thermus thermophilus, this protein is Succinate--CoA ligase [GDP-forming] subunit beta.